The primary structure comprises 378 residues: Pulmonary surfactant-associated protein D (378 aa).

The first 20 residues, 1–20, serve as a signal peptide directing secretion; that stretch reads MLLLPLSVLILLTQPPRSLG. S-nitrosocysteine is present on residues cysteine 35 and cysteine 40. The segment at 43–221 is disordered; it reads MENGLPGRDG…ERGAKGESGL (179 aa). The Collagen-like domain occupies 46-222; it reads GLPGRDGRDG…RGAKGESGLP (177 aa). The span at 50–65 shows a compositional bias: basic and acidic residues; the sequence is RDGRDGREGPRGEKGD. Proline 78 is modified (4-hydroxyproline). Residue lysine 87 is modified to 5-hydroxylysine. Asparagine 90 carries an N-linked (GlcNAc...) asparagine glycan. Residue proline 96 is modified to 4-hydroxyproline. At lysine 99 the chain carries 5-hydroxylysine. The segment covering 105–114 has biased composition (pro residues); that stretch reads CGPPGPPGIP. The span at 137-146 shows a compositional bias: low complexity; it reads PKGETGPKGE. A 4-hydroxyproline mark is found at proline 171 and proline 177. Residues 173–197 are compositionally biased toward low complexity; the sequence is ERGAPGSAGAAGPAGATGPQGPSGA. The segment covering 204–216 has biased composition (basic and acidic residues); the sequence is KGDRGPPGERGAK. The stretch at 223–254 forms a coiled coil; the sequence is GITALRQQVETLQGQVQRLQKAFSQYKKVELF. One can recognise a C-type lectin domain in the interval 260 to 378; sequence VGEKIFKTGG…GELRLVICEF (119 aa). 2 cysteine pairs are disulfide-bonded: cysteine 281-cysteine 376 and cysteine 354-cysteine 368. A glycan (N-linked (GlcNAc...) asparagine) is linked at asparagine 323.

Belongs to the SFTPD family. In terms of assembly, oligomeric complex of 4 set of homotrimers. Post-translationally, hydroxylation on proline residues within the sequence motif, GXPG, is most likely to be 4-hydroxy as this fits the requirement for 4-hydroxylation in vertebrates. In terms of processing, S-nitrosylation at Cys-35 and Cys-40 alters the quaternary structure which results in a pro-inflammatory chemoattractive signaling activity with macrophages.

Its subcellular location is the secreted. The protein localises to the extracellular space. It is found in the extracellular matrix. It localises to the surface film. Functionally, contributes to the lung's defense against inhaled microorganisms, organic antigens and toxins. Interacts with compounds such as bacterial lipopolysaccharides, oligosaccharides and fatty acids and modulates leukocyte action in immune response. May participate in the extracellular reorganization or turnover of pulmonary surfactant. Binds strongly maltose residues and to a lesser extent other alpha-glucosyl moieties. This is Pulmonary surfactant-associated protein D (SFTPD) from Sus scrofa (Pig).